The following is a 76-amino-acid chain: Conotoxin Gla(1)-TxVI (76 aa).

An N-terminal signal peptide occupies residues 1 to 19 (MEKLTILLLVAAVLMSTQA). Residues 20–45 (LVERAGENHSKENINFLLKRKRAADR) constitute a propeptide that is removed on maturation. Tryptophan 48 carries the post-translational modification 6'-bromotryptophan. Glutamate 50 carries the 4-carboxyglutamate modification. Cystine bridges form between cysteine 51–cysteine 65, cysteine 58–cysteine 69, and cysteine 64–cysteine 73. Proline 61 carries the 4-hydroxyproline modification. 3 positions are modified to 4-carboxyglutamate: glutamate 63, glutamate 67, and glutamate 70. Residue tryptophan 76 is modified to 6'-bromotryptophan.

As to expression, expressed by the venom duct.

It localises to the secreted. In Conus textile (Cloth-of-gold cone), this protein is Conotoxin Gla(1)-TxVI.